We begin with the raw amino-acid sequence, 444 residues long: Glycogen synthase (444 aa).

Arginine 15 provides a ligand contact to ADP-alpha-D-glucose.

It belongs to the glycosyltransferase 1 family. Bacterial/plant glycogen synthase subfamily.

It carries out the reaction [(1-&gt;4)-alpha-D-glucosyl](n) + ADP-alpha-D-glucose = [(1-&gt;4)-alpha-D-glucosyl](n+1) + ADP + H(+). It functions in the pathway glycan biosynthesis; glycogen biosynthesis. Functionally, synthesizes alpha-1,4-glucan chains using ADP-glucose. This is Glycogen synthase from Deinococcus radiodurans (strain ATCC 13939 / DSM 20539 / JCM 16871 / CCUG 27074 / LMG 4051 / NBRC 15346 / NCIMB 9279 / VKM B-1422 / R1).